The chain runs to 50 residues: Insulin 2 (50 aa).

3 disulfide bridges follow: C8–C36, C20–C49, and C35–C40.

Belongs to the insulin family. Heterodimer of a B chain and an A chain linked by two disulfide bonds.

The protein resides in the secreted. Functionally, insulin decreases blood glucose concentration. It increases cell permeability to monosaccharides, amino acids and fatty acids. It accelerates glycolysis, the pentose phosphate cycle, and glycogen synthesis in liver. The sequence is that of Insulin 2 (ins2) from Batrachoididae sp. (Toadfish).